A 207-amino-acid polypeptide reads, in one-letter code: LexA repressor (207 aa).

Positions 28–48 (VREIGEAVGLASSSTVHGHLS) form a DNA-binding region, H-T-H motif. Active-site for autocatalytic cleavage activity residues include Ser-130 and Lys-168.

The protein belongs to the peptidase S24 family. As to quaternary structure, homodimer.

It carries out the reaction Hydrolysis of Ala-|-Gly bond in repressor LexA.. Its function is as follows. Represses a number of genes involved in the response to DNA damage (SOS response), including recA and lexA. In the presence of single-stranded DNA, RecA interacts with LexA causing an autocatalytic cleavage which disrupts the DNA-binding part of LexA, leading to derepression of the SOS regulon and eventually DNA repair. In Staphylococcus aureus (strain MSSA476), this protein is LexA repressor.